The following is a 236-amino-acid chain: Biosynthetic peptidoglycan transglycosylase (236 aa).

A helical membrane pass occupies residues 12–31; the sequence is ALLWFAAGSVLVVLVLRWVP.

This sequence belongs to the glycosyltransferase 51 family.

The protein localises to the cell inner membrane. The catalysed reaction is [GlcNAc-(1-&gt;4)-Mur2Ac(oyl-L-Ala-gamma-D-Glu-L-Lys-D-Ala-D-Ala)](n)-di-trans,octa-cis-undecaprenyl diphosphate + beta-D-GlcNAc-(1-&gt;4)-Mur2Ac(oyl-L-Ala-gamma-D-Glu-L-Lys-D-Ala-D-Ala)-di-trans,octa-cis-undecaprenyl diphosphate = [GlcNAc-(1-&gt;4)-Mur2Ac(oyl-L-Ala-gamma-D-Glu-L-Lys-D-Ala-D-Ala)](n+1)-di-trans,octa-cis-undecaprenyl diphosphate + di-trans,octa-cis-undecaprenyl diphosphate + H(+). Its pathway is cell wall biogenesis; peptidoglycan biosynthesis. Functionally, peptidoglycan polymerase that catalyzes glycan chain elongation from lipid-linked precursors. In Pseudomonas savastanoi pv. phaseolicola (strain 1448A / Race 6) (Pseudomonas syringae pv. phaseolicola (strain 1448A / Race 6)), this protein is Biosynthetic peptidoglycan transglycosylase.